Here is a 597-residue protein sequence, read N- to C-terminus: Peptidyl-prolyl cis-trans isomerase-like 2 (597 aa).

A U-box domain is found at Lys-41–Asp-114. Residues Asn-328–Ile-483 enclose the PPIase cyclophilin-type domain. Basic and acidic residues predominate over residues Lys-495 to Thr-519. Disordered stretches follow at residues Lys-495–Trp-521 and Ala-560–Trp-597.

It belongs to the cyclophilin-type PPIase family. PPIL2 subfamily.

It localises to the nucleus. The catalysed reaction is [protein]-peptidylproline (omega=180) = [protein]-peptidylproline (omega=0). It catalyses the reaction S-ubiquitinyl-[E2 ubiquitin-conjugating enzyme]-L-cysteine + [acceptor protein]-L-lysine = [E2 ubiquitin-conjugating enzyme]-L-cysteine + N(6)-ubiquitinyl-[acceptor protein]-L-lysine.. Its pathway is protein modification; protein ubiquitination. Its function is as follows. May catalyze the cis-trans isomerization of proline imidic peptide bonds in oligopeptides thereby assisting the folding of proteins. May also function as a chaperone, playing a role in intracellular transport of proteins. May also have a protein ubiquitin ligase activity acting as an E3 ubiquitin protein ligase or as a ubiquitin-ubiquitin ligase promoting elongation of ubiquitin chains on proteins. The sequence is that of Peptidyl-prolyl cis-trans isomerase-like 2 (ppi-2) from Neurospora crassa (strain ATCC 24698 / 74-OR23-1A / CBS 708.71 / DSM 1257 / FGSC 987).